Consider the following 263-residue polypeptide: Ribonuclease 3 (263 aa).

Positions 1–23 are disordered; the sequence is MPHSKNQRKHRHHSHSERRRQPK. Positions 35-164 constitute an RNase III domain; the sequence is FDELLRTLNL…FVGALYLDQG (130 aa). A Mg(2+)-binding site is contributed by glutamate 77. Aspartate 81 is a catalytic residue. Mg(2+) contacts are provided by aspartate 150 and glutamate 153. The active site involves glutamate 153. A DRBM domain is found at 190-259; sequence DFKSQLQEFI…AQQALITLSQ (70 aa).

The protein belongs to the ribonuclease III family. As to quaternary structure, homodimer. Requires Mg(2+) as cofactor.

The protein resides in the cytoplasm. It catalyses the reaction Endonucleolytic cleavage to 5'-phosphomonoester.. Its function is as follows. Digests double-stranded RNA. Involved in the processing of primary rRNA transcript to yield the immediate precursors to the large and small rRNAs (23S and 16S). Processes some mRNAs, and tRNAs when they are encoded in the rRNA operon. Processes pre-crRNA and tracrRNA of type II CRISPR loci if present in the organism. In Halalkalibacterium halodurans (strain ATCC BAA-125 / DSM 18197 / FERM 7344 / JCM 9153 / C-125) (Bacillus halodurans), this protein is Ribonuclease 3.